Here is a 279-residue protein sequence, read N- to C-terminus: Cholesterol 25-hydroxylase-like protein 2 (279 aa).

2 N-linked (GlcNAc...) asparagine glycosylation sites follow: Asn-6 and Asn-13. 3 membrane-spanning segments follow: residues 36-56, 86-106, and 120-140; these read LFPV…YTVL, LALT…AQWL, and LTAF…QYYL. The 135-residue stretch at 128–262 folds into the Fatty acid hydroxylase domain; that stretch reads VGCTVVFDFQ…FAHWDWLGGT (135 aa). Residues 141–145 carry the Histidine box-1 motif; it reads WHLLH. A Histidine box-2 motif is present at residues 156–160; the sequence is HALHH. 2 consecutive transmembrane segments span residues 165–185 and 189–209; these read TFSL…GFWT and PLLL…NIWV. Positions 237 to 243 match the Histidine box-3 motif; that stretch reads RHDAHHQ.

The protein belongs to the sterol desaturase family. Fe cation is required as a cofactor.

The protein localises to the endoplasmic reticulum membrane. May catalyze the formation of 25-hydroxycholesterol from cholesterol. The protein is Cholesterol 25-hydroxylase-like protein 2 of Danio rerio (Zebrafish).